Here is a 92-residue protein sequence, read N- to C-terminus: Small ribosomal subunit protein uS19 (92 aa).

Belongs to the universal ribosomal protein uS19 family.

In terms of biological role, protein S19 forms a complex with S13 that binds strongly to the 16S ribosomal RNA. The sequence is that of Small ribosomal subunit protein uS19 from Treponema denticola (strain ATCC 35405 / DSM 14222 / CIP 103919 / JCM 8153 / KCTC 15104).